Reading from the N-terminus, the 514-residue chain is Cardiolipin synthase 2 (514 aa).

A run of 3 helical transmembrane segments spans residues 7–27, 41–61, and 71–91; these read LIFF…FIDV, ILGI…CVIF, and LTWL…YLLF. PLD phosphodiesterase domains lie at 249–276 and 427–454; these read INYR…GDEY and EKGF…DMRS. Residues His-254, Lys-256, Asp-261, His-432, Lys-434, and Asp-439 contribute to the active site.

The protein belongs to the phospholipase D family. Cardiolipin synthase subfamily.

The protein resides in the cell membrane. The catalysed reaction is 2 a 1,2-diacyl-sn-glycero-3-phospho-(1'-sn-glycerol) = a cardiolipin + glycerol. In terms of biological role, catalyzes the reversible phosphatidyl group transfer from one phosphatidylglycerol molecule to another to form cardiolipin (CL) (diphosphatidylglycerol) and glycerol. This Bacillus anthracis protein is Cardiolipin synthase 2 (cls2).